The following is a 336-amino-acid chain: uncharacterized protein (336 aa).

It belongs to the GppA/Ppx family.

This is an uncharacterized protein from Streptomyces coelicolor (strain ATCC BAA-471 / A3(2) / M145).